Consider the following 278-residue polypeptide: Indole-3-glycerol phosphate synthase (278 aa).

It belongs to the TrpC family.

It catalyses the reaction 1-(2-carboxyphenylamino)-1-deoxy-D-ribulose 5-phosphate + H(+) = (1S,2R)-1-C-(indol-3-yl)glycerol 3-phosphate + CO2 + H2O. Its pathway is amino-acid biosynthesis; L-tryptophan biosynthesis; L-tryptophan from chorismate: step 4/5. The polypeptide is Indole-3-glycerol phosphate synthase (Pseudomonas paraeruginosa (strain DSM 24068 / PA7) (Pseudomonas aeruginosa (strain PA7))).